The sequence spans 299 residues: Ribosomal RNA small subunit methyltransferase H (299 aa).

S-adenosyl-L-methionine contacts are provided by residues 24–26 (GGH), Asp43, Phe68, Asp90, and Gln97.

Belongs to the methyltransferase superfamily. RsmH family.

It is found in the cytoplasm. It carries out the reaction cytidine(1402) in 16S rRNA + S-adenosyl-L-methionine = N(4)-methylcytidine(1402) in 16S rRNA + S-adenosyl-L-homocysteine + H(+). Functionally, specifically methylates the N4 position of cytidine in position 1402 (C1402) of 16S rRNA. The protein is Ribosomal RNA small subunit methyltransferase H of Francisella tularensis subsp. tularensis (strain WY96-3418).